A 375-amino-acid polypeptide reads, in one-letter code: Trichodiene synthase (375 aa).

The protein belongs to the trichodiene synthase family.

The catalysed reaction is (2E,6E)-farnesyl diphosphate = trichodiene + diphosphate. Its pathway is sesquiterpene biosynthesis; trichothecene biosynthesis. TS is a member of the terpene cyclase group of enzymes. It catalyzes the isomerization and cyclization of farnesyl pyro-phosphate to form trichodiene, the first cyclic intermediate in the biosynthetic pathway for trichothecenes. It serves to branch trichothecene biosynthesis from the isoprenoid pathway. The sequence is that of Trichodiene synthase (TRI5) from Fusarium acaciae-mearnsii.